The primary structure comprises 52 residues: Ovomucoid (52 aa).

The region spanning 2–52 (VDCSEYPKPACPKDYRPVCGSDNKTYGNKCNFCNAVVESNGTLTLNRFGKC) is the Kazal-like domain. 3 disulfides stabilise this stretch: Cys4–Cys34, Cys12–Cys31, and Cys20–Cys52. Asn41 carries an N-linked (GlcNAc...) asparagine glycan.

The protein resides in the secreted. The sequence is that of Ovomucoid from Coturnix delegorguei (Harlequin quail).